Reading from the N-terminus, the 1992-residue chain is Fer-1-like protein 4 (1992 aa).

C2 domains follow at residues 1-97 (MALT…VLRE), 214-330 (PRGD…QKWA), and 369-502 (TSSD…AGFN). Residues 1–1952 (MALTVCVRHL…PLKTFIFFIW (1952 aa)) are Extracellular-facing. 3 disordered regions span residues 554 to 606 (RVEP…APEI), 661 to 686 (AGRQ…LEVQ), and 691 to 710 (SEDR…PAQW). Residues 559-569 (PSQTTQRSGLS) are compositionally biased toward polar residues. The span at 572-581 (TGKKKKKKEK) shows a compositional bias: basic residues. C2 domains follow at residues 951–1078 (PSSG…ELQF) and 1126–1250 (ISGH…PQEE). Disordered stretches follow at residues 1245 to 1276 (EDPQ…EAGT) and 1322 to 1361 (FQGQ…SKVS). Acidic residues-rich tracts occupy residues 1247–1257 (PQEEEETEEET) and 1328–1337 (SDDEMDEAGD). C2 domains lie at 1430–1549 (SFSE…ANCG) and 1675–1824 (VPAP…EHCS). 8 residues coordinate Ca(2+): aspartate 1464, aspartate 1470, aspartate 1519, aspartate 1521, aspartate 1527, aspartate 1795, serine 1798, and aspartate 1801. A disordered region spans residues 1862 to 1885 (EAREAQAGKKRKRKRRAGRPEDLE). Positions 1869–1878 (GKKRKRKRRA) are enriched in basic residues. A helical membrane pass occupies residues 1953–1973 (RRYWRILVLLLLALITIFLLL). Topologically, residues 1974 to 1992 (VFYTIPGQISEVIFSPVHK) are cytoplasmic.

Ca(2+) serves as cofactor.

The protein resides in the membrane. This Mus musculus (Mouse) protein is Fer-1-like protein 4 (Fer1l4).